A 213-amino-acid chain; its full sequence is Thymidylate kinase (213 aa).

10 to 17 (GLEGAGKT) serves as a coordination point for ATP.

Belongs to the thymidylate kinase family.

The catalysed reaction is dTMP + ATP = dTDP + ADP. Phosphorylation of dTMP to form dTDP in both de novo and salvage pathways of dTTP synthesis. This is Thymidylate kinase from Salmonella dublin (strain CT_02021853).